Here is a 360-residue protein sequence, read N- to C-terminus: MLRVFEAFAGYGSQRLALIKANIPHEIVGISEIEGDVLLSYSAIHENLLEERNKNIKLTDDEMRDYLKNINIPLDYKTFENRADKLGGQKLKDMYIANKLNKNFGDIRSIDPKKLPDFDFFTYSFPCQDISVAGYQNGLVADSGTRSSLLWECCKIIEHKKPKYLMMENVKNLVGKNHKVNFNKFLLYLESLGYTNYWDILNARDFGIPQNRERVFCISILNPNEDFTFPQKQNLTLSMNDLLEENVSEKFYLKNNQVSDEPILQDYIYCLDSNYWKGTFLKDFLSKKRRQLVSGKVRPDGKYPARRLTPRETWRFMGVEDTNFDKASILVSNTSLYKQSGNSIVVPVLESLFKELFKSQ.

One can recognise an SAM-dependent MTase C5-type domain in the interval L2–Q360. Residue C127 is part of the active site.

This sequence belongs to the class I-like SAM-binding methyltransferase superfamily. C5-methyltransferase family.

It carries out the reaction a 2'-deoxycytidine in DNA + S-adenosyl-L-methionine = a 5-methyl-2'-deoxycytidine in DNA + S-adenosyl-L-homocysteine + H(+). In terms of biological role, a methylase, recognizes the double-stranded sequence 5'-CCNGG-3', methylates C-2 on both strands, and protects the DNA from cleavage by the ScrFI endonuclease. This chain is Type II methyltransferase M2.ScrFI (scrFIBM), found in Lactococcus lactis subsp. cremoris (Streptococcus cremoris).